Consider the following 663-residue polypeptide: MSGPSSANPAASQDACYISLLGLAEYFRTSQPPNIKKCIQCLQALFTFTPPSKVEARTHLQMGQILMAYTRNIDMARQHLEKAWNISESLMNFDDVKFDTASLLAQLHLQTEPSSNAAKAMLRRAVELSQNNVYWHCKLLLQLSQIHASDREYSSASELLAVGADSAEEAGATYLKVLFLLSRAMILMIERKTNDVLALLNSAGQIIDNNIPNPHQKEYLKVFFLVLQVCYYLALGQVKTVKPSLKQLQMSIQTIMAPNWPSDDTIFGSNQLEMFVWLPKEQLYVLVYLVTVSHSMMAGYMDKAQKYTEKALTQIEKLKLQEDKPILSVFKVILLEHIVMCRMVMGNRELAIREIAAARDVCLAAPQRRSLLKRHSAQLHCLIGLYAMSTSFFDHAERQFLVCVSETTERDLKLFANLNLAIIYLRTKRETDLKQILDAVSTENTHTYSSQALMGGFYYVQGLHAFHKNSFHEAKRFLRETLKMANAEDLNRLTSCSLVLLSHVFLSIGNSKESMNMVTPAMQLASKIPDIHVQLWGSAILKDLHRMSKDAQHEKEAYANHVKYSENLIADQRKCVQSSHHELVNWFHGDPPITTGAPLTLPVIPEAINNPVTPLTPSSAAVAATAGAAASTTPMTQTNVAVASTSALQPPVGAVAGQFGQFY.

TPR repeat units follow at residues 455–488 (GGFY…ANAE) and 495–528 (SCSL…ASKI).

This sequence belongs to the SCC4/mau-2 family. In terms of assembly, interacts with Nipped-B to form the cohesin loading complex.

The protein localises to the nucleus. Its subcellular location is the nucleoplasm. Functionally, required for association of the cohesin complex with chromatin during interphase. Plays a role in sister chromatid cohesion and normal progression through prometaphase. This is MAU2 chromatid cohesion factor homolog from Drosophila willistoni (Fruit fly).